A 377-amino-acid polypeptide reads, in one-letter code: Peptide chain release factor 2 (377 aa).

Gln-257 is modified (N5-methylglutamine).

It belongs to the prokaryotic/mitochondrial release factor family. Methylated by PrmC. Methylation increases the termination efficiency of RF2.

It localises to the cytoplasm. In terms of biological role, peptide chain release factor 2 directs the termination of translation in response to the peptide chain termination codons UGA and UAA. The polypeptide is Peptide chain release factor 2 (Lactiplantibacillus plantarum (strain ATCC BAA-793 / NCIMB 8826 / WCFS1) (Lactobacillus plantarum)).